Consider the following 224-residue polypeptide: UPF0758 protein PBPRA0202 (224 aa).

Residues 102–224 form the MPN domain; it reads VLTSPQHTRH…IVSFSEQGWL (123 aa). The Zn(2+) site is built by His-173, His-175, and Asp-186. Positions 173–186 match the JAMM motif motif; sequence HNHPSGVAEPSQSD.

The protein belongs to the UPF0758 family.

The sequence is that of UPF0758 protein PBPRA0202 from Photobacterium profundum (strain SS9).